Reading from the N-terminus, the 644-residue chain is MFQDNPLLAQLKQQLHSQTPRAEGVVKATEKGFGFLEVDAQKSYFIPPPQMKKVMHGDRIVAVIHTEKERESAEPEELIEPFLTRFVGKVQGKNDRLSIVPDHPLLKDAIPCRAARGVQHEFKEGDWAVAEMRRHPLKGDRSFYADLTQYITFADDHFVPWWVTLARHNLEKEAPNGVATEMLDEGLERQDLTALNFVTIDSASTEDMDDALYAEELADGRLQLTVAIADPTAWIAEGSKLDNAAKIRAFTNYLPGFNIPMLPRELSDDLCSLRANEVRPALACRMIIAADGTIDDDIAFFAATIESKAKLVYDNVSDWLENNGTWQPENEGIAQQIRLLHRICLSRSEWRHHHALVFKDRPDYRFVLGEKGEVLDIVAEPRRIANRIVEESMIAANLCAARVLRDKLGFGIYNVHTGFDPANADALAALLKTHGLHVDAEEVLTLEGFCKLRRELDAQPSGFLDSRIRRFQSFAEISTEPGPHFGLGLEAYATWTSPIRKYGDMINHRLLKAVIKGEAIARPQEDITQQMAERRRLNRMAERDVGDWLYARFLNDKAGTNTRFAAEIIDVSRGGMRVRLVDNGAIAFIPAPFLHAVRDELVCSQENGTVQIKGETVYKVTDVIDVTIAEVRMETRSIIARPAA.

The RNB domain occupies 189 to 516; it reads RQDLTALNFV…NHRLLKAVIK (328 aa). The S1 motif domain maps to 561-643; it reads NTRFAAEIID…ETRSIIARPA (83 aa).

The protein belongs to the RNR ribonuclease family. RNase II subfamily.

Its subcellular location is the cytoplasm. It carries out the reaction Exonucleolytic cleavage in the 3'- to 5'-direction to yield nucleoside 5'-phosphates.. In terms of biological role, involved in mRNA degradation. Hydrolyzes single-stranded polyribonucleotides processively in the 3' to 5' direction. The protein is Exoribonuclease 2 of Salmonella paratyphi A (strain ATCC 9150 / SARB42).